A 127-amino-acid chain; its full sequence is DNA-directed RNA polymerases I, II, and III subunit RPABC2 (127 aa).

Over residues 1 to 34 (MSDNEDNFDGDDFDDVEEDEGLDDLENAEEEGQE) the composition is skewed to acidic residues. The tract at residues 1–53 (MSDNEDNFDGDDFDDVEEDEGLDDLENAEEEGQENVEILPSGERPQANQKRIT) is disordered. Serine 2 is modified (N-acetylserine). At serine 2 the chain carries Phosphoserine; by CK2.

This sequence belongs to the archaeal Rpo6/eukaryotic RPB6 RNA polymerase subunit family. In terms of assembly, component of the RNA polymerase I (Pol I), RNA polymerase II (Pol II) and RNA polymerase III (Pol III) complexes consisting of at least 13, 12 and 17 subunits, respectively. Pol I complex consists of a ten-subunit catalytic core composed of POLR1A/RPA1, POLR1B/RPA2, POLR1C/RPAC1, POLR1D/RPAC2, POLR1H/RPA12, POLR2E/RPABC1, POLR2F/RPABC2, POLR2H/RPABC3, POLR2K/RPABC4 and POLR2L/RPABC5; a mobile stalk subunit POLR1F/RPA43 protruding from the core and additional subunits homologous to general transcription factors POLR1E/RPA49 and POLR1G/RPA34. Part of Pol I pre-initiation complex (PIC), in which Pol I core assembles with RRN3 and promoter-bound UTBF and SL1/TIF-IB complex. Pol II complex contains a ten-subunit catalytic core composed of POLR2A/RPB1, POLR2B/RPB2, POLR2C/RPB3, POLR2I/RPB9, POLR2J/RPB11, POLR2E/RPABC1, POLR2F/RPABC2, POLR2H/RPABC3, POLR2K/RPABC4 and POLR2L/RPABC5 and a mobile stalk composed of two subunits POLR2D/RPB4 and POLR2G/RPB7. Part of Pol II(G) complex, in which Pol II core associates with an additional subunit POLR2M; unlike conventional Pol II, Pol II(G) functions as a transcriptional repressor. Part of TBP-based Pol II pre-initiation complex (PIC), in which Pol II core assembles with general transcription factors and other specific initiation factors including GTF2E1, GTF2E2, GTF2F1, GTF2F2, TCEA1, ERCC2, ERCC3, GTF2H2, GTF2H3, GTF2H4, GTF2H5, GTF2A1, GTF2A2, GTF2B and TBP; this large multi-subunit PIC complex mediates DNA unwinding and targets Pol II core to the transcription start site where the first phosphodiester bond forms. Pol III complex consists of a ten-subunit catalytic core composed of POLR3A/RPC1, POLR3B/RPC2, POLR1C/RPAC1, POLR1D/RPAC2, POLR3K/RPC10, POLR2E/RPABC1, POLR2F/RPABC2, POLR2H/RPABC3, POLR2K/RPABC4 and POLR2L/RPABC5; a mobile stalk composed of two subunits POLR3H/RPC8 and CRCP/RPC9, protruding from the core and functioning primarily in transcription initiation; and additional subunits homologous to general transcription factors of the RNA polymerase II machinery, POLR3C/RPC3-POLR3F/RPC6-POLR3G/RPC7 heterotrimer required for transcription initiation and POLR3D/RPC4-POLR3E/RPC5 heterodimer involved in both transcription initiation and termination.

The protein resides in the nucleus. It is found in the nucleolus. Functionally, DNA-dependent RNA polymerase catalyzes the transcription of DNA into RNA using the four ribonucleoside triphosphates as substrates. Common component of RNA polymerases I, II, and III which synthesize ribosomal RNA precursors, mRNA precursors and many functional non-coding RNAs, and small RNAs, such as 5S rRNA and tRNAs, respectively. Pol II is the central component of the basal RNA polymerase II transcription machinery. Pols are composed of mobile elements that move relative to each other. In Pol II, POLR2F/RPABC2 is part of the clamp element and together with parts of POLR2A/RPB1 and POLR2B/RPB2 forms a pocket to which the POLR2D/RPB4-POLR2G/RPB7 subcomplex binds. This Homo sapiens (Human) protein is DNA-directed RNA polymerases I, II, and III subunit RPABC2.